The sequence spans 325 residues: Phospholipid phosphatase-related protein type 1 (325 aa).

The next 3 helical transmembrane spans lie at Tyr-11–Leu-31, Phe-67–Ile-87, and Phe-127–Val-147. Asn-163 carries N-linked (GlcNAc...) asparagine glycosylation. 3 helical membrane-spanning segments follow: residues Ala-201–Thr-218, Val-230–Val-247, and Val-257–His-277. Asn-316 is a glycosylation site (N-linked (GlcNAc...) asparagine).

The protein belongs to the PA-phosphatase related phosphoesterase family.

The protein localises to the cell membrane. The protein resides in the cell projection. Its subcellular location is the neuron projection. Functionally, may play a role in neurite outgrowth and neurogenesis. The protein is Phospholipid phosphatase-related protein type 1 of Xenopus tropicalis (Western clawed frog).